The chain runs to 179 residues: Outer-membrane lipoprotein carrier protein (179 aa).

Residues 1-22 (MEVLRRYVLVFTSLCMTLFAWG) form the signal peptide.

This sequence belongs to the LolA family. Monomer.

It is found in the periplasm. Functionally, participates in the translocation of lipoproteins from the inner membrane to the outer membrane. Only forms a complex with a lipoprotein if the residue after the N-terminal Cys is not an aspartate (The Asp acts as a targeting signal to indicate that the lipoprotein should stay in the inner membrane). The chain is Outer-membrane lipoprotein carrier protein from Helicobacter hepaticus (strain ATCC 51449 / 3B1).